The following is a 188-amino-acid chain: GTP cyclohydrolase 1 (188 aa).

3 residues coordinate Zn(2+): cysteine 75, histidine 78, and cysteine 146.

Belongs to the GTP cyclohydrolase I family. As to quaternary structure, toroid-shaped homodecamer, composed of two pentamers of five dimers.

The enzyme catalyses GTP + H2O = 7,8-dihydroneopterin 3'-triphosphate + formate + H(+). The protein operates within cofactor biosynthesis; 7,8-dihydroneopterin triphosphate biosynthesis; 7,8-dihydroneopterin triphosphate from GTP: step 1/1. The protein is GTP cyclohydrolase 1 of Hahella chejuensis (strain KCTC 2396).